Consider the following 220-residue polypeptide: Cytidylate kinase (220 aa).

9–17 (GPAASGKST) is a binding site for ATP.

Belongs to the cytidylate kinase family. Type 1 subfamily.

The protein localises to the cytoplasm. The enzyme catalyses CMP + ATP = CDP + ADP. The catalysed reaction is dCMP + ATP = dCDP + ADP. This is Cytidylate kinase from Thermotoga neapolitana (strain ATCC 49049 / DSM 4359 / NBRC 107923 / NS-E).